Consider the following 722-residue polypeptide: Neprilysin-1 (722 aa).

An N-terminal signal peptide occupies residues 1-17; the sequence is MAVALLVALCVVSSRMA. In terms of domain architecture, Peptidase M13 spans 32–722; that stretch reads VCNSPVCQKA…MNPTHKCLLW (691 aa). Disulfide bonds link cysteine 33-cysteine 38, cysteine 56-cysteine 707, cysteine 64-cysteine 667, cysteine 120-cysteine 378, and cysteine 589-cysteine 719. N-linked (GlcNAc...) asparagine glycans are attached at residues asparagine 100, asparagine 184, asparagine 207, and asparagine 424. Histidine 552 lines the Zn(2+) pocket. Glutamate 553 is a catalytic residue. Position 556 (histidine 556) interacts with Zn(2+). N-linked (GlcNAc...) asparagine glycosylation occurs at asparagine 609. Zn(2+) is bound at residue glutamate 614. Residue aspartate 618 is the Proton donor of the active site.

The protein belongs to the peptidase M13 family. The cofactor is Zn(2+). Post-translationally, contains 5 disulfide bonds. As to expression, expressed by the venom gland.

Its subcellular location is the secreted. The protein is Neprilysin-1 of Trittame loki (Brush-footed trapdoor spider).